A 603-amino-acid chain; its full sequence is Carbon catabolite repressor protein 4 homolog 2 (603 aa).

A disordered region spans residues 115-136 (ENNANEDDDLNRNNSAGSGSLA). The segment covering 126–136 (RNNSAGSGSLA) has biased composition (low complexity). Glutamate 302 provides a ligand contact to Mg(2+).

This sequence belongs to the CCR4/nocturin family. Component of the CCR4-NOT complex, at least composed of CRR4 and CAF1 proteins. Mg(2+) serves as cofactor.

It localises to the nucleus. The protein resides in the cytoplasm. It carries out the reaction Exonucleolytic cleavage of poly(A) to 5'-AMP.. Functionally, acts as a catalytic component of the CCR4-NOT core complex, which in the nucleus seems to be a general transcription factor, and in the cytoplasm the major mRNA deadenylase involved in mRNA turnover. The polypeptide is Carbon catabolite repressor protein 4 homolog 2 (CCR4-2) (Arabidopsis thaliana (Mouse-ear cress)).